A 262-amino-acid polypeptide reads, in one-letter code: Acidic leucine-rich nuclear phosphoprotein 32 family member B (262 aa).

LRR repeat units lie at residues 16 to 40 (PGEV…LSSD), 43 to 64 (NLEF…PKLN), 65 to 87 (KLRK…AERT), and 89 to 110 (NLTH…EPLK). An LRRCT domain is found at 123 to 161 (CEVTMLINYRESVFTLLPQLTYLDGFDADEQEAPDSDPE). The segment covering 150 to 233 (ADEQEAPDSD…EDEEDDEADD (84 aa)) has biased composition (acidic residues). Residues 150-262 (ADEQEAPDSD…PEDEEDDEDD (113 aa)) are disordered. The Nuclear localization signal signature appears at 240–243 (KRKR). A compositionally biased stretch (acidic residues) spans 247-262 (DEGEEDPEDEEDDEDD).

It belongs to the ANP32 family. In terms of assembly, interacts with histones H3 and H4. Interacts with KLF5; this interaction induces promoter region-specific histone incorporation and inhibition of histone acetylation by ANP32B. In terms of processing, directly cleaved by caspase-3/CASP3.

The protein resides in the nucleus. Functionally, multifunctional protein that is involved in the regulation of many processes including cell proliferation, apoptosis, cell cycle progression or transcription. Regulates the proliferation of neuronal stem cells, differentiation of leukemic cells and progression from G1 to S phase of the cell cycle. As negative regulator of caspase-3-dependent apoptosis, may act as an antagonist of ANP32A in regulating tissue homeostasis. Exhibits histone chaperone properties, able to recruit histones to certain promoters, thus regulating the transcription of specific genes. Also plays an essential role in the nucleocytoplasmic transport of specific mRNAs via the uncommon nuclear mRNA export receptor XPO1/CRM1. In Gallus gallus (Chicken), this protein is Acidic leucine-rich nuclear phosphoprotein 32 family member B (ANP32B).